The following is a 906-amino-acid chain: Catenin alpha-1 (906 aa).

The residue at position 2 (Thr-2) is an N-acetylthreonine. The involved in homodimerization stretch occupies residues 2 to 228; that stretch reads TAVHAGNINF…PILYTASQAC (227 aa). A Glycyl lysine isopeptide (Lys-Gly) (interchain with G-Cter in SUMO2) cross-link involves residue Lys-57. The segment at 97 to 148 is interaction with JUP and CTNNB1; that stretch reads VRKQGDLMKAAAGEFADDPCSSVKRGNMVRAARALLSAVTRLLILADMADVY. Residues Ser-264, Ser-268, Ser-295, and Ser-297 each carry the phosphoserine modification. Residues 325–394 are interaction with alpha-actinin; sequence TRDDRRERIV…AVMDHVSDSF (70 aa). Thr-634 carries the phosphothreonine modification. Phosphoserine; by CK2 is present on Ser-641. Position 645 is a phosphothreonine (Thr-645). Phosphoserine; by CK1 occurs at positions 652 and 655. Position 658 is a phosphothreonine; by CK1 (Thr-658). Lys-797 is covalently cross-linked (Glycyl lysine isopeptide (Lys-Gly) (interchain with G-Cter in SUMO2)). Ser-851 bears the Phosphoserine mark. The segment covering 864-880 has biased composition (basic and acidic residues); the sequence is PEKKPLVKREKQDETQT. The tract at residues 864–894 is disordered; that stretch reads PEKKPLVKREKQDETQTKIKRASQKKHVNPV. Positions 881–891 are enriched in basic residues; it reads KIKRASQKKHV.

It belongs to the vinculin/alpha-catenin family. As to quaternary structure, monomer and homodimer; the monomer preferentially binds to CTNNB1 and the homodimer to actin. Component of an cadherin:catenin adhesion complex composed of at least of CDH26, beta-catenin/CTNNB1, alpha-catenin/CTNNA1 and p120 catenin/CTNND1. Possible component of an E-cadherin/ catenin adhesion complex together with E-cadherin/CDH1 and beta-catenin/CTNNB1 or gamma-catenin/JUP; the complex is located to adherens junctions. The stable association of CTNNA1 is controversial as CTNNA1 was shown not to bind to F-actin when assembled in the complex. Alternatively, the CTNNA1-containing complex may be linked to F-actin by other proteins such as LIMA1. Binds AFDN and F-actin. Interacts with ARHGAP21. Interacts with AJUBA. Interacts with LIMA1. Interacts with vinculin/VCL. Interacts with TJP2/ZO2 (via N-terminus). Interacts with TJP1/ZO1 (via N-terminus). Sumoylated. Post-translationally, phosphorylation seems to contribute to the strength of cell-cell adhesion rather than to the basic capacity for cell-cell adhesion. In terms of tissue distribution, ubiquitously expressed in normal tissues. As to expression, abundantly expressed in brain and cerebellum, also expressed in the placenta, liver, lung, colon, heart, pancreas, stomach and thymus.

It is found in the cytoplasm. It localises to the cytoskeleton. Its subcellular location is the cell junction. The protein resides in the adherens junction. The protein localises to the cell membrane. It is found in the nucleus. In terms of biological role, associates with the cytoplasmic domain of a variety of cadherins. The association of catenins to cadherins produces a complex which is linked to the actin filament network, and which seems to be of primary importance for cadherins cell-adhesion properties. Can associate with both E- and N-cadherins. Originally believed to be a stable component of E-cadherin/catenin adhesion complexes and to mediate the linkage of cadherins to the actin cytoskeleton at adherens junctions. In contrast, cortical actin was found to be much more dynamic than E-cadherin/catenin complexes and CTNNA1 was shown not to bind to F-actin when assembled in the complex suggesting a different linkage between actin and adherens junctions components. The homodimeric form may regulate actin filament assembly and inhibit actin branching by competing with the Arp2/3 complex for binding to actin filaments. Involved in the regulation of WWTR1/TAZ, YAP1 and TGFB1-dependent SMAD2 and SMAD3 nuclear accumulation. May play a crucial role in cell differentiation. This chain is Catenin alpha-1, found in Homo sapiens (Human).